Here is a 110-residue protein sequence, read N- to C-terminus: Acylphosphatase (110 aa).

Positions 24–110 (RVRVYVSGRV…SGGARGFEVR (87 aa)) constitute an Acylphosphatase-like domain. Active-site residues include Arg39 and Asn57.

Belongs to the acylphosphatase family.

The catalysed reaction is an acyl phosphate + H2O = a carboxylate + phosphate + H(+). The protein is Acylphosphatase (acyP) of Rubrobacter xylanophilus (strain DSM 9941 / JCM 11954 / NBRC 16129 / PRD-1).